Reading from the N-terminus, the 525-residue chain is Cobyric acid synthase (525 aa).

Positions 251–452 (ELEIAVLYLP…FHGIFDNDLL (202 aa)) constitute a GATase cobBQ-type domain. Cysteine 332 acts as the Nucleophile in catalysis. Histidine 444 is an active-site residue.

The protein belongs to the CobB/CobQ family. CobQ subfamily.

It participates in cofactor biosynthesis; adenosylcobalamin biosynthesis. Catalyzes amidations at positions B, D, E, and G on adenosylcobyrinic A,C-diamide. NH(2) groups are provided by glutamine, and one molecule of ATP is hydrogenolyzed for each amidation. The chain is Cobyric acid synthase from Pelotomaculum thermopropionicum (strain DSM 13744 / JCM 10971 / SI).